The primary structure comprises 192 residues: Peptidyl-tRNA hydrolase (192 aa).

A tRNA-binding site is contributed by tyrosine 18. The active-site Proton acceptor is histidine 23. TRNA is bound by residues phenylalanine 69, asparagine 71, and asparagine 117.

This sequence belongs to the PTH family. Monomer.

It localises to the cytoplasm. It carries out the reaction an N-acyl-L-alpha-aminoacyl-tRNA + H2O = an N-acyl-L-amino acid + a tRNA + H(+). Its function is as follows. Hydrolyzes ribosome-free peptidyl-tRNAs (with 1 or more amino acids incorporated), which drop off the ribosome during protein synthesis, or as a result of ribosome stalling. Catalyzes the release of premature peptidyl moieties from peptidyl-tRNA molecules trapped in stalled 50S ribosomal subunits, and thus maintains levels of free tRNAs and 50S ribosomes. The chain is Peptidyl-tRNA hydrolase from Neisseria meningitidis serogroup A / serotype 4A (strain DSM 15465 / Z2491).